Reading from the N-terminus, the 293-residue chain is Triacylglycerol lipase (293 aa).

The region spanning 10–206 is the AB hydrolase-1 domain; that stretch reads PILLVHGLFG…YYSWSGIIKG (197 aa). Substrate is bound at residue leucine 17. Catalysis depends on serine 83, which acts as the Nucleophile. Position 84 (glutamine 84) interacts with substrate. Ca(2+) is bound at residue aspartate 217. Catalysis depends on charge relay system residues aspartate 238 and histidine 260. Ca(2+) contacts are provided by aspartate 262, histidine 266, and arginine 269.

The protein belongs to the AB hydrolase superfamily. Pseudomonas lipase family. Ca(2+) serves as cofactor.

The protein localises to the secreted. It catalyses the reaction a triacylglycerol + H2O = a diacylglycerol + a fatty acid + H(+). Its function is as follows. Catalyzes the hydrolysis of triacylglycerols, with the highest activity with tributyrin (C4), lower activity with tricaprylin (C8), and much lower activity with triacetin (C2), trilaurin (C12) and triolein (C18). The sequence is that of Triacylglycerol lipase (lips) from Pseudomonas fragi.